Reading from the N-terminus, the 802-residue chain is Endoplasmin (802 aa).

Positions 1–21 (MRVLWVLGLCCVLLTFGFVRA) are cleaved as a signal peptide. Positions 42-44 (SRT) match the SRT pseudosubstrate motif motif. Asn62 carries N-linked (GlcNAc...) asparagine glycosylation. Ser64 is modified (phosphoserine). N-linked (GlcNAc...) asparagine glycosylation occurs at Asn107. Residues Asn107, Asp149, and Asn162 each contribute to the ATP site. Lys168 is subject to N6-(2-hydroxyisobutyryl)lysine. Ser172 bears the Phosphoserine mark. Phe199 contributes to the ATP binding site. N-linked (GlcNAc...) asparagine glycosylation is present at Asn217. Residues 290-317 (EEPLEEDEAAKEEKEESDDEAAVEEEEE) show a composition bias toward acidic residues. The interval 290 to 323 (EEPLEEDEAAKEEKEESDDEAAVEEEEEEKKPKT) is disordered. Phosphoserine is present on residues Ser306 and Ser403. The residue at position 404 (Lys404) is an N6-succinyllysine. A glycan (N-linked (GlcNAc...) asparagine) is linked at Asn445. A Phosphoserine modification is found at Ser447. N6-acetyllysine is present on Lys479. Residues Asn481 and Asn502 are each glycosylated (N-linked (GlcNAc...) asparagine). Position 633 is an N6-succinyllysine (Lys633). A disordered region spans residues 749–802 (IDPEAQVEEEPEEEPEDTSEDAEDSEQDEGEEMDAGTEEEEEETEKESTEKDEL). A compositionally biased stretch (acidic residues) spans 753-793 (AQVEEEPEEEPEDTSEDAEDSEQDEGEEMDAGTEEEEEETE). Phosphothreonine is present on Thr785. The short motif at 799–802 (KDEL) is the Prevents secretion from ER element.

Belongs to the heat shock protein 90 family. In terms of assembly, homodimer; disulfide-linked. Component of an EIF2 complex at least composed of CELF1/CUGBP1, CALR, CALR3, EIF2S1, EIF2S2, HSP90B1 and HSPA5. Part of a large chaperone multiprotein complex comprising DNAJB11, HSP90B1, HSPA5, HYOU, PDIA2, PDIA4, PDIA6, PPIB, SDF2L1, UGGT1 and very small amounts of ERP29, but not, or at very low levels, CALR nor CANX. Hyperglycosylated form interacts with OS9; promoting its degradation by the endoplasmic reticulum associated degradation (ERAD). Interacts with AIMP1; regulates its retention in the endoplasmic reticulum. Interacts with CNPY3; this interaction is disrupted in the presence of ATP. Interacts with TLR4, TLR9 and TLR11, but not with TLR3. Interacts with MZB1 in a calcium-dependent manner. Interacts with METTL23. Interacts with IL1B; the interaction facilitates cargo translocation into the ERGIC. Interacts with EIF2AK3. In terms of processing, phosphorylated by CK2. N-glycosylated cotranslationally at Asn-217 by STT3A-containing OST-A complex: this glycosylation is constitutive. In response to various stress, 5 additional facultative sites (Asn-62, Asn-107, Asn-445, Asn-481 and Asn-502) can be glycosylated post-translationally by STT3B-containing OST-B complex, leading to a hyperglycosylated form that is degraded by the ER-associated degradation (ERAD) pathway. In normal conditions, the OST-A complex together with CCDC134 prevent glycosylation at facultative sites during protein folding, thereby preventing hyperglycosylation. Mechanistically, nascent HSP90B1 is tethered during translation to a specialized CCDC134-containing translocon that forms a microenvironment for its folding, in which STT3A associates with the SRT pseudosubstrate motif, and prevents access to facultative glycosylation sites until folding is completed, rendering its facultative sites inaccessible to the OST-B complex.

Its subcellular location is the endoplasmic reticulum lumen. The protein resides in the sarcoplasmic reticulum lumen. It is found in the melanosome. It catalyses the reaction ATP + H2O = ADP + phosphate + H(+). Its function is as follows. ATP-dependent chaperone involved in the processing of proteins in the endoplasmic reticulum, regulating their transport. Together with MESD, acts as a modulator of the Wnt pathway by promoting the folding of LRP6, a coreceptor of the canonical Wnt pathway. When associated with CNPY3, required for proper folding of Toll-like receptors. Promotes folding and trafficking of TLR4 to the cell surface. May participate in the unfolding of cytosolic leaderless cargos (lacking the secretion signal sequence) such as the interleukin 1/IL-1 to facilitate their translocation into the ERGIC (endoplasmic reticulum-Golgi intermediate compartment) and secretion; the translocation process is mediated by the cargo receptor TMED10. The protein is Endoplasmin (Hsp90b1) of Mus musculus (Mouse).